We begin with the raw amino-acid sequence, 265 residues long: Mlc titration factor A (265 aa).

The Zn(2+) site is built by histidine 111, histidine 148, histidine 152, and glutamate 211.

Belongs to the MtfA family. As to quaternary structure, interacts with Mlc with high affinity. The cofactor is Zn(2+).

It localises to the cytoplasm. Its activity is regulated as follows. Proteolytic activity is stimulated by interaction with Mlc. Addition of the chelators EDTA or phenanthroline significantly reduces the peptidase activity, whereas the addition of other protease inhibitors has much less effect. In terms of biological role, involved in the modulation of the activity of the glucose-phosphotransferase system (glucose-PTS). Interacts with the transcriptional repressor Mlc, preventing its interaction with DNA and leading to the modulation of expression of genes regulated by Mlc, including ptsG, which encodes the PTS system glucose-specific EIICB component. Functionally, shows zinc-dependent metallopeptidase activity. In vitro, can cleave several artificial substrates. The greatest activity and specificity is observed for L-alanine fused to 4-nitroanilide (L-alanine-pNA). Shows significantly lower activity towards L-arginine-pNA, L-proline-pNA, hippuryl-L-phenylalanine and hippuryl-L-arginine, and cannot use FTC-casein. Mlc does not appear to be a biologically relevant peptidase substrate. Biologically relevant targets may have a function in growth transition under changing environmental conditions. The polypeptide is Mlc titration factor A (Escherichia coli (strain K12)).